We begin with the raw amino-acid sequence, 649 residues long: MAALLELEGIRRSYQSGEEIVDVLQDVSLTINAGELVAIIGASGSGKSTLMNILGCLDKPSAGIYRVAGQNVDELDDDALAALRREHFGFIFQRYHLLPHLSAAHNVEVPAVYAGLGKHERRERANMLLTRLGLGDRVSYQPNQLSGGQQQRVSIARALMNGGQVILADEPTGALDSHSSVEVMAILKQLQQQGHTVIIVTHDPTVAAQAERVIEIKDGRIMADSGSKNEPVVAAAELMSLTPAAPSWQQLVGRFREALLMAWRAMSANKMRTALTMLGIIIGIASVVSILVVGDAAKQLVLADIRAIGTNTIDIYPGKDFGDDDPSTRQALVHDDMAALKAQSYVSAVSPSIGGSMRLRFGNIDVAASVLGVSDEYFRVFGMAMEQGAPITREQVERQAQTVVIDLNTQRRLFPHMKDVVGQVILVGNMPATVVGVVAEKKSMFGSNKALRVWVPYSTMANRLMGRSYFDSITIRIKEGYSSKEAEQQLVRLLTLRHGKKDIFTYNMDSLLQTAEKTTQTMQLFLTLVAVISLVVGGIGVMNIMLVSVTERTREIGIRMAVGARSSDVMQQFLIEAVLVCLIGGALGISLSFAIGLIVEMFLPNWRIAFPPMALFSAFLCSTVIGVVFGYLPARSAARLNPIDALARE.

One can recognise an ABC transporter domain in the interval 5–243; the sequence is LELEGIRRSY…AAAELMSLTP (239 aa). Residue 41 to 48 coordinates ATP; sequence GASGSGKS. 5 helical membrane-spanning segments follow: residues 274 to 294, 420 to 440, 524 to 544, 578 to 598, and 608 to 628; these read ALTMLGIIIGIASVVSILVVG, VVGQVILVGNMPATVVGVVAE, LFLTLVAVISLVVGGIGVMNI, VLVCLIGGALGISLSFAIGLI, and IAFPPMALFSAFLCSTVIGVV.

It belongs to the ABC transporter superfamily. Macrolide exporter (TC 3.A.1.122) family. In terms of assembly, homodimer. Part of the tripartite efflux system MacAB-TolC, which is composed of an inner membrane transporter, MacB, a periplasmic membrane fusion protein, MacA, and an outer membrane component, TolC. The complex forms a large protein conduit and can translocate molecules across both the inner and outer membranes. Interacts with MacA.

The protein localises to the cell inner membrane. Its function is as follows. Part of the tripartite efflux system MacAB-TolC. MacB is a non-canonical ABC transporter that contains transmembrane domains (TMD), which form a pore in the inner membrane, and an ATP-binding domain (NBD), which is responsible for energy generation. Confers resistance against macrolides. The protein is Macrolide export ATP-binding/permease protein MacB 1 of Yersinia pestis bv. Antiqua (strain Antiqua).